The primary structure comprises 575 residues: Dihydroxy-acid dehydratase (575 aa).

Residue cysteine 64 coordinates [2Fe-2S] cluster. Aspartate 96 contributes to the Mg(2+) binding site. Residue cysteine 137 coordinates [2Fe-2S] cluster. Mg(2+) contacts are provided by aspartate 138 and lysine 139. Lysine 139 is modified (N6-carboxylysine). [2Fe-2S] cluster is bound at residue cysteine 214. Glutamate 465 is a Mg(2+) binding site. Serine 491 functions as the Proton acceptor in the catalytic mechanism.

The protein belongs to the IlvD/Edd family. Homodimer. [2Fe-2S] cluster is required as a cofactor. It depends on Mg(2+) as a cofactor.

The catalysed reaction is (2R)-2,3-dihydroxy-3-methylbutanoate = 3-methyl-2-oxobutanoate + H2O. The enzyme catalyses (2R,3R)-2,3-dihydroxy-3-methylpentanoate = (S)-3-methyl-2-oxopentanoate + H2O. It participates in amino-acid biosynthesis; L-isoleucine biosynthesis; L-isoleucine from 2-oxobutanoate: step 3/4. The protein operates within amino-acid biosynthesis; L-valine biosynthesis; L-valine from pyruvate: step 3/4. Functionally, functions in the biosynthesis of branched-chain amino acids. Catalyzes the dehydration of (2R,3R)-2,3-dihydroxy-3-methylpentanoate (2,3-dihydroxy-3-methylvalerate) into 2-oxo-3-methylpentanoate (2-oxo-3-methylvalerate) and of (2R)-2,3-dihydroxy-3-methylbutanoate (2,3-dihydroxyisovalerate) into 2-oxo-3-methylbutanoate (2-oxoisovalerate), the penultimate precursor to L-isoleucine and L-valine, respectively. This Mycobacterium bovis (strain ATCC BAA-935 / AF2122/97) protein is Dihydroxy-acid dehydratase.